We begin with the raw amino-acid sequence, 93 residues long: Protein NONRESPONDING TO OXYLIPINS 2, mitochondrial (93 aa).

The transit peptide at 1–27 directs the protein to the mitochondrion; the sequence is MASRCRSLSKPAFSAFRSAMNKPSIRP.

Expressed in cotyledons, roots and flowers.

It localises to the mitochondrion. Its function is as follows. Essential for mitochondrial morphology, functionality and distribution. Contributes to 9-lipoxygenase (9-LOX)-derived oxylipin synthesis, but not to brassinosteroids (BRs) signaling. Required for waving-inducing oxylipin 9-hydroxyoctadecatrienoic acid and derivatives (e.g. 9-HOT, 2-HOE, 13-HOT, 13-HOD, 13-KOD, 12,13-KHOD, 9-HOT, 9-HOD, 9-KOT, 9-KOD and 9,10-KHOE)-mediated root development regulation, including callose deposition, root waving and lateral roots formation. Involved in basal plant defense toward pathogenic bacteria (e.g. Pseudomonas syringae pv tomato), both in compatible (e.g. Pst DC3000) and incompatible (e.g. Pst DC3000 avrRPM1) interactions, as well as against obligate biotrophic pathogenic fungi (e.g. Golovinomyces cichoracearum), probably via the promotion of callose deposition in the cell wall. Confers sensitivity to the herbicide isoxaben, a herbicide inhibiting cellulose synthesis and altering the cell wall. The sequence is that of Protein NONRESPONDING TO OXYLIPINS 2, mitochondrial from Arabidopsis thaliana (Mouse-ear cress).